The following is a 619-amino-acid chain: Chaperone protein HscA homolog (619 aa).

It belongs to the heat shock protein 70 family.

In terms of biological role, chaperone involved in the maturation of iron-sulfur cluster-containing proteins. Has a low intrinsic ATPase activity which is markedly stimulated by HscB. This is Chaperone protein HscA homolog from Acinetobacter baumannii (strain ACICU).